Reading from the N-terminus, the 816-residue chain is Subtilisin-like protease SBT2.6 (816 aa).

A signal peptide spans 1 to 19; it reads MDIGCKVLVFFTCFLTVTA. The propeptide at 20 to 126 is activation peptide; sequence EIYIVTMEGE…VDRDWKVRKL (107 aa). One can recognise an Inhibitor I9 domain in the interval 22 to 124; that stretch reads YIVTMEGEPI…KSVDRDWKVR (103 aa). One can recognise a Peptidase S8 domain in the interval 120–672; the sequence is DWKVRKLTTH…SGHVNPSAAL (553 aa). Active-site charge relay system residues include Asp-160 and His-235. In terms of domain architecture, PA spans 418 to 492; that stretch reads DCQKPEVLNK…SCIPGILITD (75 aa). Asn-504 and Asn-578 each carry an N-linked (GlcNAc...) asparagine glycan. The active-site Charge relay system is Ser-597. The N-linked (GlcNAc...) asparagine glycan is linked to Asn-702.

It belongs to the peptidase S8 family.

The protein resides in the secreted. The sequence is that of Subtilisin-like protease SBT2.6 from Arabidopsis thaliana (Mouse-ear cress).